Consider the following 23-residue polypeptide: Conotoxin Tx6.5 (23 aa).

Intrachain disulfides connect cysteine 2-cysteine 10, cysteine 5-cysteine 15, and cysteine 9-cysteine 20. Proline 12 is modified (4-hydroxyproline; partial).

This sequence belongs to the conotoxin U superfamily. As to expression, expressed by the venom duct.

The protein localises to the secreted. The protein is Conotoxin Tx6.5 of Conus textile (Cloth-of-gold cone).